Consider the following 526-residue polypeptide: Probable feruloyl esterase B-2 (526 aa).

A signal peptide spans 1–18 (MTKLSLLPLLTLASAVLA). Disulfide bonds link cysteine 27–cysteine 74 and cysteine 62–cysteine 113. An N-linked (GlcNAc...) asparagine glycan is attached at asparagine 52. Residue asparagine 137 is glycosylated (N-linked (GlcNAc...) asparagine). 4 cysteine pairs are disulfide-bonded: cysteine 186-cysteine 441, cysteine 255-cysteine 272, cysteine 281-cysteine 291, and cysteine 503-cysteine 525. Serine 187 (acyl-ester intermediate) is an active-site residue. An N-linked (GlcNAc...) asparagine glycan is attached at asparagine 233. Residues aspartate 256, aspartate 259, alanine 261, aspartate 263, and isoleucine 265 each contribute to the Ca(2+) site. Residues aspartate 400 and histidine 440 each act as charge relay system in the active site. Asparagine 516 is a glycosylation site (N-linked (GlcNAc...) asparagine).

The protein belongs to the tannase family.

It localises to the secreted. It carries out the reaction feruloyl-polysaccharide + H2O = ferulate + polysaccharide.. Involved in degradation of plant cell walls. Hydrolyzes the feruloyl-arabinose ester bond in arabinoxylans as well as the feruloyl-galactose and feruloyl-arabinose ester bonds in pectin. The protein is Probable feruloyl esterase B-2 (faeB-2) of Aspergillus fumigatus (strain ATCC MYA-4609 / CBS 101355 / FGSC A1100 / Af293) (Neosartorya fumigata).